A 564-amino-acid polypeptide reads, in one-letter code: Pumilio homolog 9 (564 aa).

In terms of domain architecture, PUM-HD spans 222 to 564 (LEDTVLIGQG…KIFSKTILKK (343 aa)). Pumilio repeat units lie at residues 249–284 (EIYG…VILL), 285–320 (AIID…LIVS), 321–359 (VLTS…ALVK), 361–396 (GLKP…FVLE), 397–432 (AATK…RLVA), 433–469 (EISR…VQFR), 470–501 (MHYA…EIVR), and 502–539 (ELLC…KLVA).

Its subcellular location is the cytoplasm. In terms of biological role, sequence-specific RNA-binding protein that regulates translation and mRNA stability by binding the 3'-UTR of target mRNAs. The sequence is that of Pumilio homolog 9 (APUM9) from Arabidopsis thaliana (Mouse-ear cress).